The chain runs to 203 residues: Small ribosomal subunit protein eS1 (203 aa).

This sequence belongs to the eukaryotic ribosomal protein eS1 family.

The chain is Small ribosomal subunit protein eS1 from Methanosarcina acetivorans (strain ATCC 35395 / DSM 2834 / JCM 12185 / C2A).